The sequence spans 105 residues: DNA-directed RNA polymerase RPB9 homolog (105 aa).

Cys-4, Cys-7, Cys-24, Cys-26, Cys-73, Cys-76, and Cys-96 together coordinate Zn(2+). A C4-type; atypical zinc finger spans residues 4 to 26; the sequence is CKACSSCMVRTYVDGNIIFRCSC.

This sequence belongs to the Asfivirus DNA-directed RNA polymerase RPB9 homolog family. In terms of assembly, part of the viral DNA-directed RNA polymerase that consists of 8 polII-like subunits (RPB1, RPB2, RPB3, RPB5, RPB6, RPB7, RPB9, RPB10), a capping enzyme and a termination factor.

It localises to the host cytoplasm. Its function is as follows. Component of the DNA-directed RNA polymerase (RNAP) that catalyzes the transcription in the cytoplasm of viral DNA into RNA using the four ribonucleoside triphosphates as substrates. The sequence is that of DNA-directed RNA polymerase RPB9 homolog from African swine fever virus (isolate Pig/Kenya/KEN-50/1950) (ASFV).